The following is an 82-amino-acid chain: Antimicrobial peptide Smp43 (82 aa).

The signal sequence occupies residues Met-1–Ala-22. Positions Glu-66 to Ser-82 are excised as a propeptide.

This sequence belongs to the non-disulfide-bridged peptide (NDBP) superfamily. Long chain multifunctional peptide (group 2) family. Expressed by the venom gland.

The protein resides in the secreted. Its subcellular location is the target cell membrane. Functionally, antimicrobial peptide with moderate activity against Gram-positive bacteria and Gram-negative bacteria, as well as low activity against fungi. Acts by inducing bacterial membrane disruption. Shows activity against B.subtilis (MIC=4 ug/ml), S.epidermidis (MIC=64 ug/ml), S.aureus (MIC=32 ug/ml), E.coli (MIC=128 ug/ml), K.pneumoniae (MIC=64 ug/ml), P.aeruginosa (MIC=64 ug/ml), and C.albicans (MIC=128 ug/ml). Does not show hemolysis activity. This is Antimicrobial peptide Smp43 from Scorpio palmatus (Israeli golden scorpion).